Reading from the N-terminus, the 866-residue chain is Leucine--tRNA ligase (866 aa).

The 'HIGH' region signature appears at 42–52; sequence PYPSGKLHMGH. A 'KMSKS' region motif is present at residues 630-634; that stretch reads KMSKS. K633 is a binding site for ATP.

It belongs to the class-I aminoacyl-tRNA synthetase family.

The protein resides in the cytoplasm. The enzyme catalyses tRNA(Leu) + L-leucine + ATP = L-leucyl-tRNA(Leu) + AMP + diphosphate. The chain is Leucine--tRNA ligase from Laribacter hongkongensis (strain HLHK9).